Consider the following 349-residue polypeptide: MDAIAARALSVVRACVTVTDARVSLDPGVMETLGIAINRYNGLTNHSVSMRPQTQAERNEMFFMCTDMVLAALNVQIGNISPDYDQALATVGALATTEIPYNVQAMNDIVRITGQMQTFGPSKVQTGPYAGAVEVQQSGRYYVPQGRTRGGYINSNIAEVCMDAGAAGQVNALLAPRRGDAVMIYFVWRPLRIFCDPQGASLESAPGTFVTVDGVNVAAGDVVAWNTIAPVNVGNPGARRSILQFEVLWYTSLDRSLDTVPELAPTLTRCYAYVSPTWHALRAVIFQQMNMQPINPPIFPPTERNEIVAYLLVASLADVYAALRPDFRMNGVVAPVGQINRALVLAAYH.

N-linked (GlcNAc...) asparagine; by host glycosylation occurs at Asn45.

This sequence belongs to the orbivirus VP7 family. Homotrimer.

It localises to the virion. Major structural core protein; binds to structural protein VP3. Constitutes the surface of the AHSV core. This is Core protein VP7 (Segment-7) from African horse sickness virus 6 (AHSV-6).